We begin with the raw amino-acid sequence, 111 residues long: uncharacterized protein (111 aa).

The next 3 membrane-spanning stretches (helical) occupy residues 4–22, 49–71, and 91–108; these read FWILMLIAITISLASQFFI, LLILFVFSLSFFPVEYLLLLFFI, and YMYHIVEVSLMFMLLIYV.

It is found in the cell membrane. This is an uncharacterized protein from Bacillus subtilis (strain 168).